We begin with the raw amino-acid sequence, 207 residues long: ADP-ribosylation factor (207 aa).

Gly2 carries the N-myristoyl glycine lipid modification. Residues 32-39 (GLDGAGKT), 75-79 (DIGGQ), and 133-136 (NKID) each bind GTP.

Belongs to the small GTPase superfamily. Arf family.

It is found in the golgi apparatus. Functionally, GTP-binding protein involved in protein trafficking; may modulate vesicle budding and uncoating within the Golgi apparatus. This is ADP-ribosylation factor (ARF-1) from Encephalitozoon cuniculi (strain GB-M1) (Microsporidian parasite).